The sequence spans 334 residues: MKKNQFLKESDVTAESVFFMTRRQVLKALGISAAALSLPHAAHADLLSWFKGNDRPPAPAGKPLEFSKPAAWQNDLPLTPADKVSGYNNFYEFGLDKADPAANAGSLKTDPWTLKISGEVAKPLTLDHDDLTRRFPLEERIYRMRCVEAWSMVVPWIGFPLHKLLALAEPTSNAKYVAFETIYAPEQMPGQQDRFIGGGLKYPYVEGLRLDEAMHPLTLMTVGVYGKALPPQNGAPVRLIVPWKYGFKGIKSIVSIKLTRERPPTTWNLAAPDEYGFYANVNPHVDHPRWSQATERFIGSGGILDVQRQPTLLFNGYAEQVASLYRGLDLRENF.

A signal peptide (tat-type signal) is located at residues 1–44 (MKKNQFLKESDVTAESVFFMTRRQVLKALGISAAALSLPHAAHA). Residues N88, 91–92 (YE), C146, T181, N233, R238, and 249–251 (GIK) each bind Mo-molybdopterin.

The protein belongs to the MsrP family. Heterodimer of a catalytic subunit (MsrP) and a heme-binding subunit (MsrQ). Requires Mo-molybdopterin as cofactor. Post-translationally, predicted to be exported by the Tat system. The position of the signal peptide cleavage has not been experimentally proven.

The protein resides in the periplasm. The enzyme catalyses L-methionyl-[protein] + a quinone + H2O = L-methionyl-(S)-S-oxide-[protein] + a quinol. It carries out the reaction L-methionyl-[protein] + a quinone + H2O = L-methionyl-(R)-S-oxide-[protein] + a quinol. Its function is as follows. Part of the MsrPQ system that repairs oxidized periplasmic proteins containing methionine sulfoxide residues (Met-O), using respiratory chain electrons. Thus protects these proteins from oxidative-stress damage caused by reactive species of oxygen and chlorine generated by the host defense mechanisms. MsrPQ is essential for the maintenance of envelope integrity under bleach stress, rescuing a wide series of structurally unrelated periplasmic proteins from methionine oxidation, including the primary periplasmic chaperone SurA and the lipoprotein Pal. The catalytic subunit MsrP is non-stereospecific, being able to reduce both (R-) and (S-) diastereoisomers of methionine sulfoxide. This is Protein-methionine-sulfoxide reductase catalytic subunit MsrP from Escherichia coli (strain 55989 / EAEC).